We begin with the raw amino-acid sequence, 333 residues long: Adenosine deaminase (333 aa).

His12 and His14 together coordinate Zn(2+). His14, Asp16, and Gly170 together coordinate substrate. His197 contributes to the Zn(2+) binding site. The active-site Proton donor is Glu200. Asp278 contacts Zn(2+). Substrate is bound at residue Asp279.

It belongs to the metallo-dependent hydrolases superfamily. Adenosine and AMP deaminases family. Adenosine deaminase subfamily. Zn(2+) serves as cofactor.

The enzyme catalyses adenosine + H2O + H(+) = inosine + NH4(+). The catalysed reaction is 2'-deoxyadenosine + H2O + H(+) = 2'-deoxyinosine + NH4(+). Catalyzes the hydrolytic deamination of adenosine and 2-deoxyadenosine. The sequence is that of Adenosine deaminase from Aliivibrio fischeri (strain ATCC 700601 / ES114) (Vibrio fischeri).